The primary structure comprises 499 residues: Heparin cofactor 2 (499 aa).

The first 19 residues, 1–19 (MKHSLNALLIFLIITSAWG), serve as a signal peptide directing secretion. S37 is subject to Phosphoserine; by FAM20C. N49 carries an N-linked (GlcNAc...) (complex) asparagine glycan. A chemotactic activity region spans residues 68–79 (DWIPEGEEDDDY). Repeat copies occupy residues 73 to 83 (GEEDDDYLDLE) and 87 to 97 (SEDDDYIDIVD). The tract at residues 73–97 (GEEDDDYLDLEKIFSEDDDYIDIVD) is 2 X 11 AA approximate repeats, Asp/Glu-rich (acidic) (hirudin-like). Sulfotyrosine is present on residues Y79 and Y92. N188 is a glycosylation site (N-linked (GlcNAc...) asparagine). The segment at 192-212 (KYEITTIHNLFRKLTHRLFRR) is glycosaminoglycan-binding site. N-linked (GlcNAc...) asparagine glycosylation occurs at N387.

This sequence belongs to the serpin family. Phosphorylated by FAM20C in the extracellular medium. Expressed predominantly in liver. Also present in plasma. As to expression, expressed in plasma (at protein level). Expressed in liver.

Thrombin inhibitor activated by the glycosaminoglycans, heparin or dermatan sulfate. In the presence of the latter, HC-II becomes the predominant thrombin inhibitor in place of antithrombin III (AT-III). Also inhibits chymotrypsin, but in a glycosaminoglycan-independent manner. In terms of biological role, peptides at the N-terminal of HC-II have chemotactic activity for both monocytes and neutrophils. Functionally, shows negligible inhibition, in vitro, of thrombin and tPA and no inhibition of factor Xa, in vitro. This chain is Heparin cofactor 2 (SERPIND1), found in Homo sapiens (Human).